The following is a 131-amino-acid chain: MSLSRHDIRKIAFQTLFALGSNPDANSEDIYQELLDEDNNDSDLSYLNELVDGVLDHQSEIDMEITKYLRKNWNIGRLNKTDLIILRIAIFEIKYSDVASKIAVNEAVELAKEFSDDKSYKFVNAILQNLI.

Belongs to the NusB family.

Functionally, involved in transcription antitermination. Required for transcription of ribosomal RNA (rRNA) genes. Binds specifically to the boxA antiterminator sequence of the ribosomal RNA (rrn) operons. This chain is Transcription antitermination protein NusB, found in Ligilactobacillus salivarius (strain UCC118) (Lactobacillus salivarius).